Reading from the N-terminus, the 208-residue chain is V-type ATP synthase subunit D (208 aa).

Belongs to the V-ATPase D subunit family.

Produces ATP from ADP in the presence of a proton gradient across the membrane. This Streptococcus pyogenes serotype M1 protein is V-type ATP synthase subunit D.